The following is a 509-amino-acid chain: Flotillin-like protein FloT (509 aa).

At 1 to 3 (MTM) the chain is on the cytoplasmic side. The stretch at 4 to 24 (PIIMIIGVVFFLLIALIAVFI) is an intramembrane region. Over 25–509 (TKYRTAGPDE…KEAKTIQKSE (485 aa)) the chain is Cytoplasmic. A PHB domain region spans residues 119–301 (AAEQFLGKSK…KIIERQKQIE (183 aa)). Residues 203–509 (RIAQVKRDAD…KEAKTIQKSE (307 aa)) are required for correct localization. Short sequence motifs (EA repeat) lie at residues 342 to 344 (AEA), 357 to 360 (AEAE), 370 to 373 (AEAE), and 390 to 394 (AEAEA). The tract at residues 485–509 (KGNVKQSINELTNEIKEAKTIQKSE) is not required for correct localization.

This sequence belongs to the band 7/mec-2 family. Flotillin subfamily. Homooligomerizes. Oligomerizes in very large complexes in vitro. Interacts with FloA, FtsH, FtsX, OppA, SdhA and SecY in detergent-resistant membrane (DRM) fractions. Interacts with FtsH at midcell. Interacts with FloA. Interacts in vivo with KinC, FloA, FtsH and ResE. Interacts with ResE, colocalizes with ResE in FloT-only membrane rafts. Another study shows nearly complete colocalization with NfeD2, but only minor colocalization with FtsH or KinC.

It localises to the cell membrane. The protein resides in the membrane raft. Found in functional membrane microdomains (FMM) that may be equivalent to eukaryotic membrane rafts. FMMs are highly dynamic and increase in number as cells age. FloA and FloT function is partially redundant; double deletions have marked synthetic phenotypes. Flotillins are thought to be important factors in membrane fluidity, especially during periods of rapid growth in rich media. Whether specific proteins are associated with FMMs is controversial; in one study FloT rafts have been shown to include proteins involved in adaptation to stationary phase, while FloA-FloT rafts include proteins involved in differentiation including sporulation, biofilm formation and DNA uptake competence. Another (more finely resolved) study only showed association of NfeD2 with FloT rafts of all the proteins examined. Aids homooligomerization of KinC and KinD but not KinB, may prevent incorrect hetero-association of the above kinases. Simultaneous overexpression of both FloA and FloT leads to defects in cell division and differentiation, in part caused by stabilization of FtsH and its subsequent increased ability to degrade proteins. Cells make more biofilm, are about half as long, have less EzrA and more frequent Z-rings. Involved in spatial organization of membranes, perhaps recruiting proteins (e.g. NfeD2) to specific membrane regions. Plays a role in phosphorylation of master regulator Spo0A, an early sporulation event. Plays a non-redundant role with dynamin-like protein A (dynA) in membrane dynamics and cell shape. This is Flotillin-like protein FloT from Bacillus subtilis (strain 168).